A 133-amino-acid polypeptide reads, in one-letter code: ATP synthase epsilon chain (133 aa).

The segment at 81 to 110 is disordered; that stretch reads AAERPEQIDTERARKAKERAEQRLASEHVD.

Belongs to the ATPase epsilon chain family. F-type ATPases have 2 components, CF(1) - the catalytic core - and CF(0) - the membrane proton channel. CF(1) has five subunits: alpha(3), beta(3), gamma(1), delta(1), epsilon(1). CF(0) has three main subunits: a, b and c.

It localises to the cell membrane. Its function is as follows. Produces ATP from ADP in the presence of a proton gradient across the membrane. The protein is ATP synthase epsilon chain of Shouchella clausii (strain KSM-K16) (Alkalihalobacillus clausii).